Reading from the N-terminus, the 509-residue chain is Steroid 17-alpha-hydroxylase/17,20 lyase (509 aa).

Asparagine 202 lines the substrate pocket. Heme is bound at residue cysteine 442.

It belongs to the cytochrome P450 family. Heme serves as cofactor.

It localises to the endoplasmic reticulum membrane. Its subcellular location is the microsome membrane. The catalysed reaction is a C21-steroid + reduced [NADPH--hemoprotein reductase] + O2 = a 17alpha-hydroxy-C21-steroid + oxidized [NADPH--hemoprotein reductase] + H2O + H(+). The enzyme catalyses progesterone + reduced [NADPH--hemoprotein reductase] + O2 = 17alpha-hydroxyprogesterone + oxidized [NADPH--hemoprotein reductase] + H2O + H(+). It catalyses the reaction pregnenolone + reduced [NADPH--hemoprotein reductase] + O2 = 17alpha-hydroxypregnenolone + oxidized [NADPH--hemoprotein reductase] + H2O + H(+). It carries out the reaction 17alpha-hydroxyprogesterone + reduced [NADPH--hemoprotein reductase] + O2 = androst-4-ene-3,17-dione + acetate + oxidized [NADPH--hemoprotein reductase] + H2O + 2 H(+). The catalysed reaction is 17alpha-hydroxyprogesterone + reduced [NADPH--hemoprotein reductase] + O2 = 16alpha,17alpha-dihydroxyprogesterone + oxidized [NADPH--hemoprotein reductase] + H2O + H(+). The enzyme catalyses 16alpha,17alpha-dihydroxyprogesterone + reduced [NADPH--hemoprotein reductase] + O2 = 6beta,16alpha,17alpha-trihydroxyprogesterone + oxidized [NADPH--hemoprotein reductase] + H2O + H(+). It catalyses the reaction 17alpha-hydroxypregnenolone + reduced [NADPH--hemoprotein reductase] + O2 = 3beta-hydroxyandrost-5-en-17-one + acetate + oxidized [NADPH--hemoprotein reductase] + H2O + 2 H(+). It carries out the reaction 16alpha,17alpha-dihydroxypregnenolone + reduced [NADPH--hemoprotein reductase] + O2 = 3beta,16alpha-dihydroxy-androst-5-en-17-one + acetate + oxidized [NADPH--hemoprotein reductase] + H2O + 2 H(+). The catalysed reaction is 3beta-hydroxyandrost-5-en-17-one + reduced [NADPH--hemoprotein reductase] + O2 = 3beta,16alpha-dihydroxy-androst-5-en-17-one + oxidized [NADPH--hemoprotein reductase] + H2O + H(+). The enzyme catalyses androst-4-ene-3,17-dione + reduced [NADPH--hemoprotein reductase] + O2 = 16alpha-hydroxyandrost-4-ene-3,17-dione + oxidized [NADPH--hemoprotein reductase] + H2O + H(+). The protein operates within steroid hormone biosynthesis. It participates in steroid biosynthesis; glucocorticoid biosynthesis. Regulated predominantly by intracellular cAMP levels. The 17,20-lyase activity is stimulated by cytochrome b5, which acts as an allosteric effector increasing the Vmax of the lyase activity. A cytochrome P450 monooxygenase involved in corticoid and androgen biosynthesis. Catalyzes 17-alpha hydroxylation of C21 steroids, which is common for both pathways. A second oxidative step, required only for androgen synthesis, involves an acyl-carbon cleavage. The 17-alpha hydroxy intermediates, as part of adrenal glucocorticoids biosynthesis pathway, are precursors of cortisol. Hydroxylates steroid hormones, pregnenolone and progesterone to form 17-alpha hydroxy metabolites, followed by the cleavage of the C17-C20 bond to form C19 steroids, dehydroepiandrosterone (DHEA) and androstenedione. Has 16-alpha hydroxylase activity. Catalyzes 16-alpha hydroxylation of 17-alpha hydroxy pregnenolone, followed by the cleavage of the C17-C20 bond to form 16-alpha-hydroxy DHEA. Also 16-alpha hydroxylates androgens, relevant for estriol synthesis. Mechanistically, uses molecular oxygen inserting one oxygen atom into a substrate, and reducing the second into a water molecule, with two electrons provided by NADPH via cytochrome P450 reductase (CPR; NADPH-ferrihemoprotein reductase). This chain is Steroid 17-alpha-hydroxylase/17,20 lyase (CYP17A1), found in Sus scrofa (Pig).